Consider the following 391-residue polypeptide: Multidrug resistance protein MdtL (391 aa).

Residues 1–3 are Cytoplasmic-facing; the sequence is MSR. A helical transmembrane segment spans residues 4–24; the sequence is FLICSFALVLLYPAGIDMYLV. Topologically, residues 25-41 are periplasmic; that stretch reads GLPRIAADLNASEAQLH. The chain crosses the membrane as a helical span at residues 42-62; that stretch reads IAFSVYLAGMAAAMLFAGKVA. The Cytoplasmic portion of the chain corresponds to 63–68; it reads DRSGRK. Residues 69–89 form a helical membrane-spanning segment; the sequence is PVAIPGAALFIITSVFCSLAE. At 90–92 the chain is on the periplasmic side; sequence TST. A helical transmembrane segment spans residues 93-113; that stretch reads LFLAGRFLQGLGAGCCYVVAF. Topologically, residues 114-130 are cytoplasmic; sequence AILRDTLDDRRRAKVLS. A helical transmembrane segment spans residues 131–151; the sequence is LLNGITCIIPVLAPVLGHLIM. The Periplasmic portion of the chain corresponds to 152–157; the sequence is LKFPWQ. The helical transmembrane segment at 158–178 threads the bilayer; sequence SLFWTMAIMGIAVLMLSLFIL. The Cytoplasmic portion of the chain corresponds to 179–198; it reads KETRPAAPAASDKSRENSES. A helical transmembrane segment spans residues 199-221; sequence LLNRFFLSRVVITTLSVSVILTF. Residues 222–244 lie on the Periplasmic side of the membrane; it reads VNTSPVLLMEIMGFERGEYATIM. Residues 245 to 265 form a helical membrane-spanning segment; that stretch reads ALTAGVSMTVSFSTPFALGIF. Over 266-268 the chain is Cytoplasmic; that stretch reads KPR. The chain crosses the membrane as a helical span at residues 269–289; that stretch reads TLMITSQVLFLAAGITLTVSP. The Periplasmic segment spans residues 290–292; sequence SHA. Residues 293–313 traverse the membrane as a helical segment; sequence VSLFGITLICAGFSVGFGVAM. Residues 314-330 lie on the Cytoplasmic side of the membrane; sequence SQALGPFSLRAGVASST. The chain crosses the membrane as a helical span at residues 331-351; it reads LGIAQVCGSSLWIWLAAVVGI. Residues 352–355 lie on the Periplasmic side of the membrane; sequence SAWN. Residues 356 to 376 form a helical membrane-spanning segment; the sequence is MLIGILIACSIVSLLLIMFVA. Over 377–391 the chain is Cytoplasmic; it reads PGRPVTAHEEIHHHA.

This sequence belongs to the major facilitator superfamily. DHA1 family. MdtL (TC 2.A.1.2.22) subfamily.

The protein resides in the cell inner membrane. In terms of biological role, confers resistance to chloramphenicol. This is Multidrug resistance protein MdtL (mdtL) from Escherichia coli O157:H7.